The following is a 695-amino-acid chain: UvrABC system protein B (695 aa).

The Helicase ATP-binding domain occupies 45-434 (EGIEDGLSFQ…QVVEQVVRPT (390 aa)). Residue 58-65 (GVTGSGKT) participates in ATP binding. The short motif at 111–134 (YYDYYQPEAYVPQRDLFIEKDSSI) is the Beta-hairpin element. The Helicase C-terminal domain maps to 449-602 (QVDDLLSEIN…QMAFNEANGI (154 aa)). A UVR domain is found at 646-681 (SKEIKRLEKLMMDHAKNLEFEKAAQVRDQLAKLKAQ).

Belongs to the UvrB family. Forms a heterotetramer with UvrA during the search for lesions. Interacts with UvrC in an incision complex.

The protein resides in the cytoplasm. In terms of biological role, the UvrABC repair system catalyzes the recognition and processing of DNA lesions. A damage recognition complex composed of 2 UvrA and 2 UvrB subunits scans DNA for abnormalities. Upon binding of the UvrA(2)B(2) complex to a putative damaged site, the DNA wraps around one UvrB monomer. DNA wrap is dependent on ATP binding by UvrB and probably causes local melting of the DNA helix, facilitating insertion of UvrB beta-hairpin between the DNA strands. Then UvrB probes one DNA strand for the presence of a lesion. If a lesion is found the UvrA subunits dissociate and the UvrB-DNA preincision complex is formed. This complex is subsequently bound by UvrC and the second UvrB is released. If no lesion is found, the DNA wraps around the other UvrB subunit that will check the other stand for damage. The polypeptide is UvrABC system protein B (Cupriavidus pinatubonensis (strain JMP 134 / LMG 1197) (Cupriavidus necator (strain JMP 134))).